The chain runs to 1344 residues: Myb-binding protein 1A (1344 aa).

Positions 1–24 are disordered; it reads MAEMKSPTKAEPASPAEAPQGDRR. At Ala2 the chain carries N-acetylalanine. An interaction with MYB region spans residues 2–580; the sequence is AEMKSPTKAE…WDQMMSTLKE (579 aa). Ser14 carries the post-translational modification Phosphoserine. Lys69 and Lys156 each carry N6-acetyllysine. 2 short sequence motifs (nuclear export signal) span residues 238–256 and 261–279; these read SEDN…ANSV and KLPD…ENKF. 2 disordered regions span residues 696–752 and 1150–1344; these read NEDE…DVDP and PKSE…VQTP. A compositionally biased stretch (basic and acidic residues) spans 708 to 730; the sequence is TDEKQLKHGEDADSDSEDSKNSE. A compositionally biased stretch (acidic residues) spans 731–746; it reads SDVDSEDGEESEEEDR. Residues 1150 to 1161 are compositionally biased toward basic and acidic residues; sequence PKSEKKNVKDIP. Lys1151 is covalently cross-linked (Glycyl lysine isopeptide (Lys-Gly) (interchain with G-Cter in SUMO2)). Residues 1154 to 1344 form a required for nuclear and nucleolar localization region; sequence KKNVKDIPSD…RVARRRVQTP (191 aa). Phosphoserine is present on residues Ser1162 and Ser1166. The span at 1170 to 1187 shows a compositional bias: basic residues; sequence TKRKKKGFLPETKKRKKL. Ser1189 carries the phosphoserine modification. Phosphothreonine is present on Thr1193. Phosphoserine is present on residues Ser1221 and Ser1246. A compositionally biased stretch (low complexity) spans 1247–1256; that stretch reads PAPNNPTLSP. At Thr1253 the chain carries Phosphothreonine. Ser1255 bears the Phosphoserine mark. Thr1258 and Thr1280 each carry phosphothreonine. 3 positions are modified to phosphoserine: Ser1283, Ser1305, and Ser1318. Over residues 1301–1316 the composition is skewed to basic residues; sequence VKRRSSQSALPKKRAR. Low complexity predominate over residues 1317-1329; sequence LSLVSRSPSLLQS. Citrulline is present on Arg1322. Phosphoserine occurs at positions 1323, 1325, and 1329. The span at 1331 to 1344 shows a compositional bias: basic residues; the sequence is IRKRRVARRRVQTP.

This sequence belongs to the MYBBP1A family. Binds to and represses JUN and MYB via the leucine zipper regions present in these proteins. Also binds to and represses PPARGC1A: this interaction is abrogated when PPARGC1A is phosphorylated by MAPK1/ERK. Binds to and stimulates transcription by AHR. Binds to KPNA2. Component of the B-WICH complex, at least composed of SMARCA5/SNF2H, BAZ1B/WSTF, SF3B1, DEK, MYO1C, ERCC6, MYBBP1A and DDX21. Interacts with CLOCK and CRY1. Post-translationally, citrullinated by PADI4.

Its subcellular location is the nucleus. The protein resides in the nucleolus. It is found in the cytoplasm. May activate or repress transcription via interactions with sequence specific DNA-binding proteins. Repression may be mediated at least in part by histone deacetylase activity (HDAC activity). Acts as a corepressor and in concert with CRY1, represses the transcription of the core circadian clock component PER2. Preferentially binds to dimethylated histone H3 'Lys-9' (H3K9me2) on the PER2 promoter. Has a role in rRNA biogenesis together with PWP1. The protein is Myb-binding protein 1A (Mybbp1a) of Rattus norvegicus (Rat).